The chain runs to 355 residues: Peptide chain release factor 1 (355 aa).

Gln-233 carries the post-translational modification N5-methylglutamine. Residues 283–293 (EKNKDRADARK) show a composition bias toward basic and acidic residues. A disordered region spans residues 283-304 (EKNKDRADARKSQVGTGDRSER).

The protein belongs to the prokaryotic/mitochondrial release factor family. Post-translationally, methylated by PrmC. Methylation increases the termination efficiency of RF1.

Its subcellular location is the cytoplasm. Its function is as follows. Peptide chain release factor 1 directs the termination of translation in response to the peptide chain termination codons UAG and UAA. This is Peptide chain release factor 1 from Finegoldia magna (strain ATCC 29328 / DSM 20472 / WAL 2508) (Peptostreptococcus magnus).